The chain runs to 201 residues: FMN-dependent NADH:quinone oxidoreductase (201 aa).

Residues S10, 16-18, 96-99, and 140-143 each bind FMN; these read SQS, MYNF, and SRGG.

The protein belongs to the azoreductase type 1 family. In terms of assembly, homodimer. FMN is required as a cofactor.

The catalysed reaction is 2 a quinone + NADH + H(+) = 2 a 1,4-benzosemiquinone + NAD(+). It catalyses the reaction N,N-dimethyl-1,4-phenylenediamine + anthranilate + 2 NAD(+) = 2-(4-dimethylaminophenyl)diazenylbenzoate + 2 NADH + 2 H(+). In terms of biological role, quinone reductase that provides resistance to thiol-specific stress caused by electrophilic quinones. Functionally, also exhibits azoreductase activity. Catalyzes the reductive cleavage of the azo bond in aromatic azo compounds to the corresponding amines. This Salmonella choleraesuis (strain SC-B67) protein is FMN-dependent NADH:quinone oxidoreductase.